The primary structure comprises 471 residues: Pancreatic lipase-related protein 2 (471 aa).

A signal peptide spans 1–17 (MLPSWTIGLLLLATVRG). Residues cysteine 21 and cysteine 27 are joined by a disulfide bond. An N-linked (GlcNAc...) asparagine glycan is attached at asparagine 71. Positions 93–105 (IHGFIDKGEDSWP) are required for galactolipase activity. A disulfide bond links cysteine 109 and cysteine 120. Serine 171 acts as the Nucleophile in catalysis. Aspartate 195 functions as the Charge relay system in the catalytic mechanism. Glutamate 206, arginine 209, aspartate 211, and aspartate 214 together coordinate Ca(2+). The cysteines at positions 256 and 280 are disulfide-linked. The segment at 257–279 (QKNTLSTIVDVDGIWEGIEDFAA) is required for galactolipase activity. The Charge relay system role is filled by histidine 282. Disulfide bonds link cysteine 304/cysteine 317 and cysteine 320/cysteine 325. N-linked (GlcNAc...) asparagine glycosylation is present at asparagine 355. Residues 359–471 (WRYRVSVTLA…ENILQTLNPC (113 aa)) enclose the PLAT domain. An intrachain disulfide couples cysteine 455 to cysteine 471.

The protein belongs to the AB hydrolase superfamily. Lipase family.

The protein localises to the secreted. Its subcellular location is the zymogen granule membrane. It localises to the cell projection. The protein resides in the neuron projection. The catalysed reaction is a triacylglycerol + H2O = a diacylglycerol + a fatty acid + H(+). It catalyses the reaction a 1,2-diacyl-3-O-(beta-D-galactosyl)-sn-glycerol + 2 H2O = 3-beta-D-galactosyl-sn-glycerol + 2 a fatty acid + 2 H(+). It carries out the reaction 1,2,3-tri-(9Z-octadecenoyl)-glycerol + H2O = di-(9Z)-octadecenoylglycerol + (9Z)-octadecenoate + H(+). The enzyme catalyses di-(9Z)-octadecenoylglycerol + H2O = (9Z-octadecenoyl)-glycerol + (9Z)-octadecenoate + H(+). The catalysed reaction is (9Z-octadecenoyl)-glycerol + H2O = glycerol + (9Z)-octadecenoate + H(+). It catalyses the reaction 1-(9Z-octadecenoyl)-glycerol + H2O = glycerol + (9Z)-octadecenoate + H(+). It carries out the reaction 1,2,3-tripropanoylglycerol + H2O = dipropanoylglycerol + propanoate + H(+). The enzyme catalyses 1,2,3-tributanoylglycerol + H2O = dibutanoylglycerol + butanoate + H(+). The catalysed reaction is 1,2,3-trioctanoylglycerol + H2O = dioctanoylglycerol + octanoate + H(+). It catalyses the reaction 1,2-didecanoylglycerol + H2O = decanoylglycerol + decanoate + H(+). It carries out the reaction long chain 1,2-diacyl-3-O-beta-D-galactosyl-sn-glycerol + H2O = long chain acyl-3-O-beta-D-galactosyl-sn-glycerol + a fatty acid + H(+). The enzyme catalyses 1,2-dioctanoyl-3-O-beta-D-galactosyl-sn-glycerol + H2O = octanoyl-3-(beta-D-galactosyl)-sn-glycerol + octanoate + H(+). The catalysed reaction is 1,2-didodecanoyl-3-beta-D-galactosyl-sn-glycerol + H2O = dodecanoyl-3-beta-D-galactosyl-sn-glycerol + dodecanoate + H(+). It catalyses the reaction 1-beta-D-galactosyl-2,3-didodecanoyl-sn-glycerol + H2O = 1-beta-D-galactosyl-dodecanoyl-sn-glycerol + dodecanoate + H(+). It carries out the reaction a 1,2-diacyl-3-O-[alpha-D-galactosyl-(1-&gt;6)-beta-D-galactosyl]-sn-glycerol + H2O = acyl-3-O-[alpha-D-galactosyl-(1-&gt;6)-beta-D-galactosyl]-sn-glycerol + a fatty acid + H(+). The enzyme catalyses long chain 1,2-diacyl-3-O-[alpha-D-galactosyl-(1-&gt;6)-beta-D-galactosyl]-sn-glycerol + H2O = long chain acyl-3-O-[alpha-D-galactosyl-(1-&gt;6)-beta-D-galactosyl]-sn-glycerol + a fatty acid + H(+). The catalysed reaction is 1,2-dioctanoyl-3-O-[alpha-D-galactosyl-(1-&gt;6)-beta-D-galactosyl]-sn-glycerol + H2O = octanoyl-3-O-[alpha-D-galactosyl-(1-&gt;6)-beta-D-galactosyl]-sn-glycerol + octanoate + H(+). It catalyses the reaction 1,2-didodecanoyl-3-O-[alpha-D-galactosyl-(1-&gt;6)-beta-D-galactosyl]-sn-glycerol + H2O = dodecanoyl-3-O-[alpha-D-galactosyl-(1-&gt;6)-beta-D-galactosyl]-sn-glycerol + dodecanoate + H(+). It carries out the reaction a 1,2-diacyl-sn-glycero-3-phosphocholine + H2O = a monoacyl-sn-glycero-3-phosphocholine + a fatty acid + H(+). It functions in the pathway glycerolipid metabolism; triacylglycerol degradation. Its pathway is glycolipid metabolism. Its activity is regulated as follows. Up-regulated by CLPS in the presence of increasing concentrations of bile salts. Its function is as follows. Lipase that primarily hydrolyzes triglycerides and galactosylglycerides. In neonates, may play a major role in pancreatic digestion of dietary fats such as milk fat globules enriched in long-chain triglycerides. Hydrolyzes short-, medium- and long-chain fatty acyls in triglycerides without apparent positional specificity. Can completely deacylate triacylglycerols. When the liver matures and bile salt synthesis increases, likely functions mainly as a galactolipase and monoacylglycerol lipase. Hydrolyzes monogalactosyldiglycerols (MGDG) and digalactosyldiacylglycerols (DGDG) present in a plant-based diet, releasing long-chain polyunsaturated fatty acids. Hydrolyzes medium- and long-chain fatty acyls in galactolipids. May act together with LIPF to hydrolyze partially digested triglycerides. Hydrolyzes long-chain monoglycerides with high efficiency. In cytotoxic T cells, contributes to perforin-dependent cell lysis, but is unlikely to mediate direct cytotoxicity. Also has low phospholipase activity. In neurons, required for the localization of the phospholipid 1-oleoyl-2-palmitoyl-PC (OPPC) to neurite tips through acyl chain remodeling of membrane phospholipids. The resulting OPPC-rich lipid membrane domain recruits the t-SNARE protein STX4 by selectively interacting with the STX4 transmembrane domain and this promotes surface expression of the dopamine transporter SLC6A3/DAT at neurite tips by facilitating fusion of SLC6A3-containing transport vesicles with the plasma membrane. In Sus scrofa (Pig), this protein is Pancreatic lipase-related protein 2 (PNLIPRP2).